We begin with the raw amino-acid sequence, 340 residues long: Protein RecA (340 aa).

67-74 (GNESSGKT) lines the ATP pocket.

It belongs to the RecA family.

The protein localises to the cytoplasm. Its function is as follows. Can catalyze the hydrolysis of ATP in the presence of single-stranded DNA, the ATP-dependent uptake of single-stranded DNA by duplex DNA, and the ATP-dependent hybridization of homologous single-stranded DNAs. It interacts with LexA causing its activation and leading to its autocatalytic cleavage. This chain is Protein RecA, found in Mycoplasma genitalium (strain ATCC 33530 / DSM 19775 / NCTC 10195 / G37) (Mycoplasmoides genitalium).